A 117-amino-acid polypeptide reads, in one-letter code: MGWSCIILFLVATATGVHSHVQLQQPGAELVKPGASVKVSCKASGYTFTSYWMHWVKQRPGQGLEWIGRIHPSDSDTNYNQKFKGKATLTVDKSSSTAYMQLSSLTSEDSAVYYCAI.

Residues Met1–Ser19 form the signal peptide. The interval His20–Thr49 is framework-1. A disulfide bridge connects residues Cys41 and Cys115. A complementarity-determining-1 region spans residues Ser50–His54. The interval Trp55–Gly68 is framework-2. The complementarity-determining-2 stretch occupies residues Arg69–Gly85. The framework-3 stretch occupies residues Lys86–Ile117.

This Mus musculus (Mouse) protein is Ig heavy chain V region 102.